Reading from the N-terminus, the 302-residue chain is 4-hydroxy-tetrahydrodipicolinate synthase (302 aa).

Thr46 is a pyruvate binding site. Tyr135 acts as the Proton donor/acceptor in catalysis. The active-site Schiff-base intermediate with substrate is Lys164. Val206 serves as a coordination point for pyruvate.

Belongs to the DapA family. In terms of assembly, homotetramer; dimer of dimers.

It localises to the cytoplasm. The enzyme catalyses L-aspartate 4-semialdehyde + pyruvate = (2S,4S)-4-hydroxy-2,3,4,5-tetrahydrodipicolinate + H2O + H(+). The protein operates within amino-acid biosynthesis; L-lysine biosynthesis via DAP pathway; (S)-tetrahydrodipicolinate from L-aspartate: step 3/4. Functionally, catalyzes the condensation of (S)-aspartate-beta-semialdehyde [(S)-ASA] and pyruvate to 4-hydroxy-tetrahydrodipicolinate (HTPA). This chain is 4-hydroxy-tetrahydrodipicolinate synthase, found in Acidobacterium capsulatum (strain ATCC 51196 / DSM 11244 / BCRC 80197 / JCM 7670 / NBRC 15755 / NCIMB 13165 / 161).